We begin with the raw amino-acid sequence, 807 residues long: G-type lectin S-receptor-like serine/threonine-protein kinase At1g61420 (807 aa).

The N-terminal stretch at Met1–Ala24 is a signal peptide. The Bulb-type lectin domain maps to Gly25–Phe144. Over Gly25–Ala426 the chain is Extracellular. 6 N-linked (GlcNAc...) asparagine glycosylation sites follow: Asn53, Asn94, Asn117, Asn134, Asn236, and Asn267. The EGF-like; atypical domain maps to Pro278 to Glu314. Cystine bridges form between Cys282/Cys294 and Cys288/Cys302. Residues Asn320, Asn336, and Asn375 are each glycosylated (N-linked (GlcNAc...) asparagine). In terms of domain architecture, PAN spans Cys333–Leu413. 2 disulfide bridges follow: Cys368–Cys389 and Cys372–Cys378. A helical membrane pass occupies residues Ile427–Phe447. The Cytoplasmic portion of the chain corresponds to Trp448–Arg807. A Protein kinase domain is found at Phe494 to Phe779. Residues Leu500–Val508 and Lys522 each bind ATP. 2 positions are modified to phosphoserine: Ser528 and Ser543. The interval Arg583 to Ile600 is caM-binding. The active-site Proton acceptor is Asp619. Ser623 and Ser636 each carry phosphoserine. Thr653 carries the phosphothreonine modification. 2 positions are modified to phosphoserine: Ser696 and Ser790.

The protein belongs to the protein kinase superfamily. Ser/Thr protein kinase family.

Its subcellular location is the cell membrane. The catalysed reaction is L-seryl-[protein] + ATP = O-phospho-L-seryl-[protein] + ADP + H(+). The enzyme catalyses L-threonyl-[protein] + ATP = O-phospho-L-threonyl-[protein] + ADP + H(+). The polypeptide is G-type lectin S-receptor-like serine/threonine-protein kinase At1g61420 (Arabidopsis thaliana (Mouse-ear cress)).